Here is a 175-residue protein sequence, read N- to C-terminus: Large ribosomal subunit protein uL10 (175 aa).

It belongs to the universal ribosomal protein uL10 family. In terms of assembly, part of the ribosomal stalk of the 50S ribosomal subunit. The N-terminus interacts with L11 and the large rRNA to form the base of the stalk. The C-terminus forms an elongated spine to which L12 dimers bind in a sequential fashion forming a multimeric L10(L12)X complex.

Its function is as follows. Forms part of the ribosomal stalk, playing a central role in the interaction of the ribosome with GTP-bound translation factors. In Pelotomaculum thermopropionicum (strain DSM 13744 / JCM 10971 / SI), this protein is Large ribosomal subunit protein uL10.